The sequence spans 387 residues: Protein RecA (387 aa).

Residue 78–85 (GPESSGKT) participates in ATP binding. The span at 355–369 (KSIERDTKETKETKS) shows a compositional bias: basic and acidic residues. Residues 355–387 (KSIERDTKETKETKSKQPVSFSTEADGDIAVGE) form a disordered region.

This sequence belongs to the RecA family.

It localises to the cytoplasm. Functionally, can catalyze the hydrolysis of ATP in the presence of single-stranded DNA, the ATP-dependent uptake of single-stranded DNA by duplex DNA, and the ATP-dependent hybridization of homologous single-stranded DNAs. It interacts with LexA causing its activation and leading to its autocatalytic cleavage. This Leptospira biflexa serovar Patoc (strain Patoc 1 / ATCC 23582 / Paris) protein is Protein RecA.